We begin with the raw amino-acid sequence, 257 residues long: Phosphatidylglycerol--prolipoprotein diacylglyceryl transferase (257 aa).

The next 4 helical transmembrane spans lie at 12–32 (FSIR…VYLA), 49–69 (FILM…VIFE), 83–103 (IWNG…LLVI), and 109–129 (LINP…AQAI). Arg131 contributes to the a 1,2-diacyl-sn-glycero-3-phospho-(1'-sn-glycerol) binding site. Transmembrane regions (helical) follow at residues 167 to 187 (VPTF…IMSI), 197 to 217 (GEVA…IEGM), and 226 to 246 (GLRV…VMII).

Belongs to the Lgt family.

It localises to the cell membrane. The catalysed reaction is L-cysteinyl-[prolipoprotein] + a 1,2-diacyl-sn-glycero-3-phospho-(1'-sn-glycerol) = an S-1,2-diacyl-sn-glyceryl-L-cysteinyl-[prolipoprotein] + sn-glycerol 1-phosphate + H(+). It functions in the pathway protein modification; lipoprotein biosynthesis (diacylglyceryl transfer). In terms of biological role, catalyzes the transfer of the diacylglyceryl group from phosphatidylglycerol to the sulfhydryl group of the N-terminal cysteine of a prolipoprotein, the first step in the formation of mature lipoproteins. The chain is Phosphatidylglycerol--prolipoprotein diacylglyceryl transferase from Streptococcus agalactiae serotype Ia (strain ATCC 27591 / A909 / CDC SS700).